Reading from the N-terminus, the 398-residue chain is Meiotically up-regulated gene 126 protein (398 aa).

Disordered stretches follow at residues glutamate 30 to arginine 81 and phenylalanine 119 to serine 260. 2 stretches are compositionally biased toward polar residues: residues phenylalanine 119–threonine 135 and valine 183–glutamine 199. A compositionally biased stretch (low complexity) spans glutamine 210–glutamate 222. The span at serine 224–lysine 236 shows a compositional bias: basic and acidic residues. A compositionally biased stretch (polar residues) spans arginine 248–serine 260. The next 4 helical transmembrane spans lie at isoleucine 269–glutamate 289, isoleucine 305–leucine 325, glycine 341–isoleucine 361, and leucine 373–tyrosine 393.

The protein localises to the membrane. Functionally, has a role in meiosis. This chain is Meiotically up-regulated gene 126 protein (mug126), found in Schizosaccharomyces pombe (strain 972 / ATCC 24843) (Fission yeast).